A 138-amino-acid polypeptide reads, in one-letter code: Basic phospholipase A2 B (138 aa).

The signal sequence occupies residues 1–16; that stretch reads MRALWIVAVLLLGVEG. Intrachain disulfides connect cysteine 42–cysteine 131, cysteine 44–cysteine 60, cysteine 59–cysteine 111, cysteine 65–cysteine 138, cysteine 66–cysteine 104, cysteine 73–cysteine 97, and cysteine 91–cysteine 102. Residues tyrosine 43, glycine 45, and glycine 47 each coordinate Ca(2+). Histidine 63 is an active-site residue. A Ca(2+)-binding site is contributed by aspartate 64. Residue aspartate 105 is part of the active site.

Belongs to the phospholipase A2 family. Group II subfamily. D49 sub-subfamily. Ca(2+) is required as a cofactor. In terms of tissue distribution, expressed by the venom gland.

It localises to the secreted. The enzyme catalyses a 1,2-diacyl-sn-glycero-3-phosphocholine + H2O = a 1-acyl-sn-glycero-3-phosphocholine + a fatty acid + H(+). Its function is as follows. Snake venom phospholipase A2 (PLA2) that shows potent hemolytic activity, and exhibits medium anticoagulant effects by binding to factor Xa (F10) and inhibiting the prothrombinase activity (IC(50) is 90 nM). It is one of the few phospholipases A2 capable of hydrolyzing the phospholipids of E.coli membranes in the presence of a bactericidal/permeability-increasing protein (BPI) of neutrophils. PLA2 catalyzes the calcium-dependent hydrolysis of the 2-acyl groups in 3-sn-phosphoglycerides. This is Basic phospholipase A2 B from Gloydius halys (Chinese water mocassin).